Consider the following 71-residue polypeptide: Large ribosomal subunit protein bL31 (71 aa).

Zn(2+)-binding residues include Cys16, Cys18, Cys37, and Cys40.

Belongs to the bacterial ribosomal protein bL31 family. Type A subfamily. As to quaternary structure, part of the 50S ribosomal subunit. Zn(2+) serves as cofactor.

Its function is as follows. Binds the 23S rRNA. The chain is Large ribosomal subunit protein bL31 from Pseudomonas putida (strain W619).